We begin with the raw amino-acid sequence, 153 residues long: Ribosomal RNA large subunit methyltransferase H (153 aa).

Residues L70, G102, and 121-126 (LSSMTF) each bind S-adenosyl-L-methionine.

This sequence belongs to the RNA methyltransferase RlmH family. As to quaternary structure, homodimer.

It is found in the cytoplasm. The enzyme catalyses pseudouridine(1915) in 23S rRNA + S-adenosyl-L-methionine = N(3)-methylpseudouridine(1915) in 23S rRNA + S-adenosyl-L-homocysteine + H(+). Its function is as follows. Specifically methylates the pseudouridine at position 1915 (m3Psi1915) in 23S rRNA. In Dictyoglomus thermophilum (strain ATCC 35947 / DSM 3960 / H-6-12), this protein is Ribosomal RNA large subunit methyltransferase H.